Reading from the N-terminus, the 306-residue chain is Phosphoadenosine phosphosulfate reductase (306 aa).

Disordered regions lie at residues 1 to 30 (MPAKMHSNYPSDSETAELRDSTESGYVSGG) and 245 to 266 (YHSTSPVKENEDERSGRWKGQA).

Belongs to the PAPS reductase family. CysH subfamily.

The enzyme catalyses [thioredoxin]-disulfide + sulfite + adenosine 3',5'-bisphosphate + 2 H(+) = [thioredoxin]-dithiol + 3'-phosphoadenylyl sulfate. The protein operates within sulfur metabolism; hydrogen sulfide biosynthesis; sulfite from sulfate: step 3/3. In terms of biological role, the NADP dependent reduction of PAPS into sulfite involves thioredoxin which probably plays the role of a thiol carrier. In Emericella nidulans (strain FGSC A4 / ATCC 38163 / CBS 112.46 / NRRL 194 / M139) (Aspergillus nidulans), this protein is Phosphoadenosine phosphosulfate reductase (sA).